The primary structure comprises 467 residues: Zinc finger protein mex-6 (467 aa).

2 stretches are compositionally biased toward low complexity: residues 1 to 22 and 179 to 195; these read MTAT…ATAQ and STTR…LPTS. 2 disordered regions span residues 1–35 and 163–209; these read MTAT…QQHP and TNPQ…NRNS. At Thr190 the chain carries Phosphothreonine. Positions 196–207 are enriched in basic and acidic residues; that stretch reads REYETVQRDRNR. 2 consecutive C3H1-type zinc fingers follow at residues 273–302 and 317–347; these read NFKT…HGLK and KYKT…HPSD. The tract at residues 425-451 is disordered; that stretch reads INENDLPPHLRRIRRGNPPVTRSRPSF. Residue Ser457 is modified to Phosphoserine.

As to quaternary structure, interacts (probably when phosphorylated on Thr-190) with plk-1 (via POLO box domain) and plk-2 (via POLO box domain). Phosphorylation on Ser-457 by par-1 promotes localization of the protein to the anterior cytoplasm of the zygote.

It is found in the cytoplasm. In terms of biological role, functions with mex-5 to affect embryonic viability, establish soma germline asymmetry in embryos and establish plk-1, pie-1, mex-1, and pos-1 asymmetry in embryos. Also affects formation of intestinal cells. The chain is Zinc finger protein mex-6 (mex-6) from Caenorhabditis elegans.